Here is a 216-residue protein sequence, read N- to C-terminus: Probable nicotinate-nucleotide adenylyltransferase (216 aa).

This sequence belongs to the NadD family.

The enzyme catalyses nicotinate beta-D-ribonucleotide + ATP + H(+) = deamido-NAD(+) + diphosphate. It functions in the pathway cofactor biosynthesis; NAD(+) biosynthesis; deamido-NAD(+) from nicotinate D-ribonucleotide: step 1/1. In terms of biological role, catalyzes the reversible adenylation of nicotinate mononucleotide (NaMN) to nicotinic acid adenine dinucleotide (NaAD). This is Probable nicotinate-nucleotide adenylyltransferase from Geobacter sulfurreducens (strain ATCC 51573 / DSM 12127 / PCA).